The primary structure comprises 410 residues: Trifunctional NAD biosynthesis/regulator protein NadR (410 aa).

The HTH cro/C1-type domain occupies 7-62 (LKTAIKQQGCTLQQVADASGMTKGYLSQLLNAKIKSPSAQKLEALHRFLGLEFPRR). The H-T-H motif DNA-binding region spans 18-37 (LQQVADASGMTKGYLSQLLN). Positions 63–229 (QKNIGVVFGK…EYIPTEVKPF (167 aa)) are nicotinamide mononucleotide adenylyltransferase. NAD(+)-binding positions include 70–73 (FGKF), His77, Arg104, 144–157 (EEGM…WDVW), 177–179 (TSE), 204–206 (MNI), 259–261 (SAW), and 294–297 (YIDF). Residues 230 to 410 (FVRTVAILGG…LVKEMMGEQG (181 aa)) form a ribosylnicotinamide kinase region.

This sequence in the central section; belongs to the bacterial NMN adenylyltransferase family. The protein in the C-terminal section; belongs to the bacterial RNK family. As to quaternary structure, homotetramer.

The protein localises to the cell membrane. Its subcellular location is the cytoplasm. The enzyme catalyses beta-nicotinamide D-ribonucleotide + ATP + H(+) = diphosphate + NAD(+). It catalyses the reaction beta-nicotinamide D-riboside + ATP = beta-nicotinamide D-ribonucleotide + ADP + H(+). It participates in cofactor biosynthesis; NAD(+) biosynthesis [regulation]. The protein operates within cofactor biosynthesis; NAD(+) biosynthesis; NAD(+) from nicotinamide D-ribonucleotide: step 1/1. Feed-back regulated by NAD. A high level of NAD causes NadR to lose enzymatic activity and repress several NAD synthetic genes; conversely, a low NAD level activates the assimilatory enzymatic activities and leads to derepression of biosynthetic genes. Functionally, this enzyme has three activities: DNA binding, nicotinamide mononucleotide (NMN) adenylyltransferase and ribosylnicotinamide (RN) kinase. The DNA-binding domain binds to the nadB operator sequence in an NAD- and ATP-dependent manner. As NAD levels increase within the cell, the affinity of NadR for the nadB operator regions of nadA, nadB, and pncB increases, repressing the transcription of these genes. The RN kinase activity catalyzes the phosphorylation of RN to form nicotinamide ribonucleotide. The NMN adenylyltransferase activity catalyzes the transfer of the AMP moiety of ATP to nicotinamide ribonucleotide to form NAD(+). The NMN adenylyltransferase domain also functions as the NAD and ATP sensor. This chain is Trifunctional NAD biosynthesis/regulator protein NadR (nadR), found in Salmonella typhimurium (strain LT2 / SGSC1412 / ATCC 700720).